A 546-amino-acid chain; its full sequence is Phosphomethylpyrimidine synthase (546 aa).

Positions 1–19 (MSTPSSRSQAPETVTTGPI) are enriched in polar residues. The interval 1 to 20 (MSTPSSRSQAPETVTTGPIQ) is disordered. Substrate is bound by residues Asn146, Met175, Tyr204, His240, 260 to 262 (SRG), 301 to 304 (DGLR), and Glu340. Zn(2+) is bound at residue His344. Tyr367 contacts substrate. His408 is a binding site for Zn(2+). [4Fe-4S] cluster contacts are provided by Cys488, Cys491, and Cys496.

The protein belongs to the ThiC family. Requires [4Fe-4S] cluster as cofactor.

The catalysed reaction is 5-amino-1-(5-phospho-beta-D-ribosyl)imidazole + S-adenosyl-L-methionine = 4-amino-2-methyl-5-(phosphooxymethyl)pyrimidine + CO + 5'-deoxyadenosine + formate + L-methionine + 3 H(+). Its pathway is cofactor biosynthesis; thiamine diphosphate biosynthesis. Catalyzes the synthesis of the hydroxymethylpyrimidine phosphate (HMP-P) moiety of thiamine from aminoimidazole ribotide (AIR) in a radical S-adenosyl-L-methionine (SAM)-dependent reaction. The sequence is that of Phosphomethylpyrimidine synthase from Mycobacteroides abscessus (strain ATCC 19977 / DSM 44196 / CCUG 20993 / CIP 104536 / JCM 13569 / NCTC 13031 / TMC 1543 / L948) (Mycobacterium abscessus).